The sequence spans 307 residues: GMP synthase [glutamine-hydrolyzing] subunit B (307 aa).

Residues methionine 1–arginine 184 form the GMPS ATP-PPase domain. Serine 27–serine 33 lines the ATP pocket.

Heterodimer composed of a glutamine amidotransferase subunit (A) and a GMP-binding subunit (B).

It carries out the reaction XMP + L-glutamine + ATP + H2O = GMP + L-glutamate + AMP + diphosphate + 2 H(+). The protein operates within purine metabolism; GMP biosynthesis; GMP from XMP (L-Gln route): step 1/1. In terms of biological role, catalyzes the synthesis of GMP from XMP. In Thermococcus kodakarensis (strain ATCC BAA-918 / JCM 12380 / KOD1) (Pyrococcus kodakaraensis (strain KOD1)), this protein is GMP synthase [glutamine-hydrolyzing] subunit B.